The primary structure comprises 1521 residues: Suppressor of Ty 6 homolog (1521 aa).

A disordered region spans residues 1–238 (MDFIDNQAEE…EEIIEDDGEG (238 aa)). Basic residues predominate over residues 26–41 (KKMKMAKEKSKRKKKM). Positions 26–42 (KKMKMAKEKSKRKKKMV) match the Nuclear localization signal motif. Composition is skewed to acidic residues over residues 45-56 (SDEDEDDDDDEE) and 67-76 (ADDDDEEEDA). Positions 77 to 89 (KSEKSEKSRHSGE) are enriched in basic and acidic residues. The segment covering 90 to 99 (DELDDEDLDL) has biased composition (acidic residues). The segment covering 126–157 (PIRRPNHEDDDLLSERGSDDGDRRKDRGRGDR) has biased composition (basic and acidic residues). 3 stretches are compositionally biased toward acidic residues: residues 166–176 (RSEDDFIEDDG), 191–200 (NLPEGAEDDA), and 209–238 (FNLDEFYDDDDGEDGLEDEEEEIIEDDGEG). The S1 motif domain maps to 1183–1252 (LGDSRQGGCP…ERFSLFLSCK (70 aa)). An SH2 domain is found at 1300-1389 (HPNFHNVSYE…IARFVQPMIQ (90 aa)).

This sequence belongs to the SPT6 family. As to quaternary structure, interacts with glp-1 and lin-12. Abundant in embryos, and less abundant in larvae.

The protein resides in the nucleus. Functionally, histone H3-H4 chaperone that plays a role in maintenance of chromatin structure during RNA polymerase II transcription elongation. Required for several aspects of morphogenesis of C.elegans, including regulation of division in the germline and gut and specification of ventral-uterine precursor cell fate. The chain is Suppressor of Ty 6 homolog (emb-5) from Caenorhabditis elegans.